The primary structure comprises 79 residues: Conotoxin Cl9.4 (79 aa).

A signal peptide spans 1 to 23; the sequence is MNCYLILTVALLLTSAMTGTTTA. The propeptide occupies 24–37; it reads GQLNKKGVTLREDD. Cystine bridges form between C41–C58, C46–C68, and C48–C73.

As to expression, expressed by the venom duct.

The protein resides in the secreted. The sequence is that of Conotoxin Cl9.4 from Californiconus californicus (California cone).